A 129-amino-acid polypeptide reads, in one-letter code: Small ribosomal subunit protein uS8 (129 aa).

The protein belongs to the universal ribosomal protein uS8 family. In terms of assembly, part of the 30S ribosomal subunit. Contacts proteins S5 and S12.

Its function is as follows. One of the primary rRNA binding proteins, it binds directly to 16S rRNA central domain where it helps coordinate assembly of the platform of the 30S subunit. The polypeptide is Small ribosomal subunit protein uS8 (Mesoplasma florum (strain ATCC 33453 / NBRC 100688 / NCTC 11704 / L1) (Acholeplasma florum)).